Reading from the N-terminus, the 304-residue chain is Non-specific ribonucleoside hydrolase RihC (304 aa).

The active site involves His-233.

It belongs to the IUNH family. RihC subfamily.

Its function is as follows. Hydrolyzes both purine and pyrimidine ribonucleosides with a broad-substrate specificity. This Shigella sonnei (strain Ss046) protein is Non-specific ribonucleoside hydrolase RihC.